The primary structure comprises 710 residues: Proline-rich receptor-like protein kinase PERK13 (710 aa).

Positions 1–229 (MSDSPTSSPP…SVPPPANSGG (229 aa)) are disordered. Over 1–235 (MSDSPTSSPP…NSGGGYQGKT (235 aa)) the chain is Extracellular. Pro residues-rich tracts occupy residues 7–21 (SSPP…PPPD), 29–130 (APPP…PPPP), 137–151 (PPAP…PPAS), and 168–188 (ATSP…PNAP). An N-linked (GlcNAc...) asparagine glycan is attached at N191. The segment covering 209-220 (SPSRGVPSSGNS) has biased composition (low complexity). A helical transmembrane segment spans residues 236-256 (MAGFAIAGFAVIALMAVVFLV). Residues 257-710 (RRKKKRNIDA…ENRNFNNRRY (454 aa)) lie on the Cytoplasmic side of the membrane. The interval 289-334 (QNPTKGYSGPGGYNSQQQSNSGNSFGSQRGGGGYTRSGSAPDSAVM) is disordered. Residues 301 to 315 (YNSQQQSNSGNSFGS) show a composition bias toward low complexity. A Phosphothreonine modification is found at T342. In terms of domain architecture, Protein kinase spans 353-619 (FSKHNILGEG…RHSGPKRPRM (267 aa)). ATP contacts are provided by residues 359–367 (LGEGGFGCV) and K381. Phosphotyrosine is present on Y426. D477 acts as the Proton acceptor in catalysis. A Phosphoserine modification is found at S510. Phosphothreonine is present on residues T511 and T516. Y524 bears the Phosphotyrosine mark. Residues 676-710 (SGDYSVQDSRKGSNGASSEFTRNETENRNFNNRRY) form a disordered region.

It belongs to the protein kinase superfamily. Ser/Thr protein kinase family. Interacts with KIPK1 and KIPK2 (via its cytosolic domain). As to expression, mostly expressed in roots, especially in root hairs.

Its subcellular location is the cell membrane. The catalysed reaction is L-seryl-[protein] + ATP = O-phospho-L-seryl-[protein] + ADP + H(+). It carries out the reaction L-threonyl-[protein] + ATP = O-phospho-L-threonyl-[protein] + ADP + H(+). In terms of biological role, negatively regulates root hair elongation. The sequence is that of Proline-rich receptor-like protein kinase PERK13 (PERK13) from Arabidopsis thaliana (Mouse-ear cress).